Reading from the N-terminus, the 154-residue chain is Transcriptional repressor NrdR (154 aa).

A zinc finger spans residues 3-34 (CPFCSHNDSKVIDSRPTDEGQAIRRRRECISC). The ATP-cone domain occupies 49 to 139 (LIVVKKNGNR…VYREFKDINT (91 aa)).

Belongs to the NrdR family. The cofactor is Zn(2+).

In terms of biological role, negatively regulates transcription of bacterial ribonucleotide reductase nrd genes and operons by binding to NrdR-boxes. The chain is Transcriptional repressor NrdR from Alkaliphilus oremlandii (strain OhILAs) (Clostridium oremlandii (strain OhILAs)).